Consider the following 684-residue polypeptide: Nuclear transcription factor Y subunit gamma (684 aa).

Disordered stretches follow at residues 1–74 (MENQ…NIST), 112–238 (MNSP…SSFQ), 414–487 (HSPQ…TQQL), and 511–650 (QQQQ…KNDE). Over residues 21–49 (SNSHNNHHNNNNNNNYNNNNNNNINNINN) the composition is skewed to low complexity. A compositionally biased stretch (polar residues) spans 58 to 74 (KSIQQHSPHSSTPNIST). Residues 142–162 (HQHPSSASSSSSSSSSSLSSS) show a composition bias toward low complexity. A compositionally biased stretch (basic residues) spans 163–176 (SHHHHSNHHHHHPN). Residues 188 to 203 (PSLNDSSSNGNGTPAL) show a composition bias toward polar residues. Over residues 220-238 (TPTSTPNQRFQSNGSSSFQ) the composition is skewed to low complexity. Residues 414–423 (HSPQLQEQSS) show a composition bias toward polar residues. Residues 424 to 437 (NNNNNNNNNNNNNN) show a composition bias toward low complexity. 2 stretches are compositionally biased toward polar residues: residues 438-456 (SVSV…SPLS) and 464-477 (SQDY…NNHN). 3 stretches are compositionally biased toward low complexity: residues 478 to 487 (QSSLSQTQQL), 511 to 522 (QQQQHSQQISQQ), and 529 to 637 (PSNS…NNNN).

This sequence belongs to the NFYC/HAP5 subunit family. As to quaternary structure, heterotrimeric transcription factor composed of three components, NF-YA, NF-YB and NF-YC. NF-YB and NF-YC must interact and dimerize for NF-YA association and DNA binding.

It is found in the nucleus. Functionally, stimulates the transcription of various genes by recognizing and binding to a CCAAT motif in promoters. This is Nuclear transcription factor Y subunit gamma (nfyc-1) from Dictyostelium discoideum (Social amoeba).